Reading from the N-terminus, the 304-residue chain is m7GpppX diphosphatase (304 aa).

Substrate-binding positions include Glu152, Lys174, and 235–246 (HYLPSYYHLHVH). The Histidine triad motif motif lies at 242 to 246 (HLHVH). Catalysis depends on His244, which acts as the Nucleophile.

Belongs to the HIT family.

It is found in the cytoplasm. The protein resides in the nucleus. It catalyses the reaction a 5'-end (N(7)-methyl 5'-triphosphoguanosine)-ribonucleoside in mRNA + H2O = N(7)-methyl-GMP + a 5'-end diphospho-ribonucleoside in mRNA + 2 H(+). Functionally, decapping scavenger enzyme that catalyzes the cleavage of a residual cap structure following the degradation of mRNAs by the 3'-&gt;5' exosome-mediated mRNA decay pathway. Hydrolyzes cap analog structures like 7-methylguanosine nucleoside triphosphate (m7GpppG) with up to 10 nucleotide substrates (small capped oligoribonucleotides) and specifically releases 5'-phosphorylated RNA fragments and 7-methylguanosine monophosphate (m7GMP). Has no activity towards mRNA molecules longer than 25 nucleotides. May also play a role in the 5'-&gt;3 mRNA decay pathway; m7GDP, the downstream product released by the 5'-&gt;3' mRNA mediated decapping activity, may be also converted by DCS1 to m7GMP. Inhibits mRNA translation. Binds to the m7GpppG cap analog. The sequence is that of m7GpppX diphosphatase (nhm1) from Schizosaccharomyces pombe (strain 972 / ATCC 24843) (Fission yeast).